The chain runs to 113 residues: Protein FAM27E3 (113 aa).

The tract at residues 1–113 (MGIFQLLRDR…YTHRHTHRVL (113 aa)) is disordered. Positions 77–99 (QTDRERERNTQRLRDRERRENGR) are enriched in basic and acidic residues. Residues 100–113 (HTHTYTHRHTHRVL) are compositionally biased toward basic residues.

It belongs to the FAM27 family.

The protein is Protein FAM27E3 (FAM27E3) of Homo sapiens (Human).